Consider the following 360-residue polypeptide: Peptide chain release factor 1 (360 aa).

The residue at position 235 (Gln-235) is an N5-methylglutamine.

Belongs to the prokaryotic/mitochondrial release factor family. Methylated by PrmC. Methylation increases the termination efficiency of RF1.

Its subcellular location is the cytoplasm. Its function is as follows. Peptide chain release factor 1 directs the termination of translation in response to the peptide chain termination codons UAG and UAA. In Dechloromonas aromatica (strain RCB), this protein is Peptide chain release factor 1.